The following is a 253-amino-acid chain: Phosphate import ATP-binding protein PstB 3 (253 aa).

The ABC transporter domain maps to 8 to 248 (LVINNLDLYY…PQDERTENYI (241 aa)). An ATP-binding site is contributed by 40–47 (GPSGCGKS).

Belongs to the ABC transporter superfamily. Phosphate importer (TC 3.A.1.7) family. As to quaternary structure, the complex is composed of two ATP-binding proteins (PstB), two transmembrane proteins (PstC and PstA) and a solute-binding protein (PstS).

The protein resides in the cell membrane. The catalysed reaction is phosphate(out) + ATP + H2O = ADP + 2 phosphate(in) + H(+). Functionally, part of the ABC transporter complex PstSACB involved in phosphate import. Responsible for energy coupling to the transport system. This Streptococcus agalactiae serotype III (strain NEM316) protein is Phosphate import ATP-binding protein PstB 3.